A 303-amino-acid chain; its full sequence is N-acetyl-D-glucosamine kinase (303 aa).

Residues 4–11 (GFDIGGTK) and 133–140 (GVGGGLIF) each bind ATP. Zn(2+) is bound by residues His157, Cys177, Cys179, and Cys184.

The protein belongs to the ROK (NagC/XylR) family. NagK subfamily.

It catalyses the reaction N-acetyl-D-glucosamine + ATP = N-acetyl-D-glucosamine 6-phosphate + ADP + H(+). The protein operates within cell wall biogenesis; peptidoglycan recycling. In terms of biological role, catalyzes the phosphorylation of N-acetyl-D-glucosamine (GlcNAc) derived from cell-wall degradation, yielding GlcNAc-6-P. The protein is N-acetyl-D-glucosamine kinase of Escherichia fergusonii (strain ATCC 35469 / DSM 13698 / CCUG 18766 / IAM 14443 / JCM 21226 / LMG 7866 / NBRC 102419 / NCTC 12128 / CDC 0568-73).